Here is a 207-residue protein sequence, read N- to C-terminus: Large ribosomal subunit protein uL3c (207 aa).

The disordered stretch occupies residues 128–148 (FTRGPMTHGSKNHRAPGSIGM).

Belongs to the universal ribosomal protein uL3 family. As to quaternary structure, part of the 50S ribosomal subunit.

It localises to the plastid. It is found in the chloroplast. In terms of biological role, one of the primary rRNA binding proteins, it binds directly near the 3'-end of the 23S rRNA, where it nucleates assembly of the 50S subunit. This Trieres chinensis (Marine centric diatom) protein is Large ribosomal subunit protein uL3c (rpl3).